The chain runs to 94 residues: Mitochondrial import receptor subunit TOM9-1 (94 aa).

Residues 1 to 48 (MAPKKIGAGKGDSSILAKISNYDIVSQGRRAACDAVYVSKKLLKSTGK) are Cytoplasmic-facing. Residues 49 to 66 (AAWIAGTTFLILAVPLIL) traverse the membrane as a helical segment. Residues 67 to 94 (ELEQDHRLGEIDFEQASLLGTPPVGAML) lie on the Mitochondrial intermembrane side of the membrane.

The protein belongs to the Tom22 family. As to quaternary structure, forms part of the preprotein translocase complex of the outer mitochondrial membrane (TOM complex) which consists of at least 6 different proteins (TOM5, TOM6, TOM7, TOM20, TOM22/TOM9 and TOM40). Expressed in roots, flowers, young cotyledons and leaves.

The protein resides in the mitochondrion outer membrane. In terms of biological role, central component of the receptor complex responsible for the recognition and translocation of cytosolically synthesized mitochondrial preproteins. Together with TOM20 functions as the transit peptide receptor at the surface of the mitochondrion outer membrane and facilitates the movement of preproteins into the translocation pore. This chain is Mitochondrial import receptor subunit TOM9-1 (TOM9-1), found in Arabidopsis thaliana (Mouse-ear cress).